The sequence spans 215 residues: Uracil phosphoribosyltransferase (215 aa).

30–34 contributes to the GTP binding site; sequence KGMVR. 5-phospho-alpha-D-ribose 1-diphosphate contacts are provided by residues Arg80, Arg105, and 139–147; that span reads DPMIATAST. Residues Ile202 and 207–209 contribute to the uracil site; that span reads GDA. Asp208 is a 5-phospho-alpha-D-ribose 1-diphosphate binding site.

The protein belongs to the UPRTase family. Requires Mg(2+) as cofactor.

The enzyme catalyses UMP + diphosphate = 5-phospho-alpha-D-ribose 1-diphosphate + uracil. Its pathway is pyrimidine metabolism; UMP biosynthesis via salvage pathway; UMP from uracil: step 1/1. Its activity is regulated as follows. Allosterically activated by GTP. Its function is as follows. Catalyzes the conversion of uracil and 5-phospho-alpha-D-ribose 1-diphosphate (PRPP) to UMP and diphosphate. This chain is Uracil phosphoribosyltransferase, found in Metallosphaera sedula (strain ATCC 51363 / DSM 5348 / JCM 9185 / NBRC 15509 / TH2).